A 358-amino-acid chain; its full sequence is Photosystem II protein D1 (358 aa).

A run of 3 helical transmembrane segments spans residues 29–46 (YVGW…AATI), 116–131 (HFLI…QWEL), and 140–154 (WICV…AATS). H116 serves as a coordination point for chlorophyll a. Residue W124 participates in pheophytin a binding. The [CaMn4O5] cluster site is built by D168 and E187. The chain crosses the membrane as a helical span at residues 195-216 (FHQLGVAGVFGGSLFCAMHGSL). H196 serves as a coordination point for chlorophyll a. A quinone-binding positions include H213 and 262 to 263 (SF). H213 is a Fe cation binding site. H270 provides a ligand contact to Fe cation. A helical membrane pass occupies residues 272–286 (FLAAWPVVCIWFTAL). 4 residues coordinate [CaMn4O5] cluster: H330, E331, D340, and A342. Residues 343 to 358 (AGEVLPIALQSPAING) constitute a propeptide that is removed on maturation.

The protein belongs to the reaction center PufL/M/PsbA/D family. As to quaternary structure, PSII is composed of 1 copy each of membrane proteins PsbA, PsbB, PsbC, PsbD, PsbE, PsbF, PsbH, PsbI, PsbJ, PsbK, PsbL, PsbM, PsbT, PsbX, PsbY, PsbZ, Psb30/Ycf12, peripheral proteins PsbO, CyanoQ (PsbQ), PsbU, PsbV and a large number of cofactors. It forms dimeric complexes. It depends on The D1/D2 heterodimer binds P680, chlorophylls that are the primary electron donor of PSII, and subsequent electron acceptors. It shares a non-heme iron and each subunit binds pheophytin, quinone, additional chlorophylls, carotenoids and lipids. D1 provides most of the ligands for the Mn4-Ca-O5 cluster of the oxygen-evolving complex (OEC). There is also a Cl(-1) ion associated with D1 and D2, which is required for oxygen evolution. The PSII complex binds additional chlorophylls, carotenoids and specific lipids. as a cofactor. Post-translationally, tyr-159 forms a radical intermediate that is referred to as redox-active TyrZ, YZ or Y-Z. In terms of processing, C-terminally processed by CtpA; processing is essential to allow assembly of the oxygen-evolving complex and thus photosynthetic growth.

It is found in the cellular thylakoid membrane. It catalyses the reaction 2 a plastoquinone + 4 hnu + 2 H2O = 2 a plastoquinol + O2. Functionally, photosystem II (PSII) is a light-driven water:plastoquinone oxidoreductase that uses light energy to abstract electrons from H(2)O, generating O(2) and a proton gradient subsequently used for ATP formation. It consists of a core antenna complex that captures photons, and an electron transfer chain that converts photonic excitation into a charge separation. The D1/D2 (PsbA/PsbD) reaction center heterodimer binds P680, the primary electron donor of PSII as well as several subsequent electron acceptors. The protein is Photosystem II protein D1 of Mastigocladus laminosus (Fischerella sp.).